A 238-amino-acid polypeptide reads, in one-letter code: Sarcospan (238 aa).

The segment at 1–33 (MGKDRQPRGQQRQGDAAGPDDPGPKKGAGTREQ) is disordered. Topologically, residues 1–48 (MGKDRQPRGQQRQGDAAGPDDPGPKKGAGTREQRGEEEAQTCCGCRFP) are extracellular. Low complexity predominate over residues 8–20 (RGQQRQGDAAGPD). Residues 49 to 69 (LLLALLQLALGVAVTVVGFLM) traverse the membrane as a helical segment. Topologically, residues 70 to 81 (ASVSSSLLVRAT) are cytoplasmic. A helical transmembrane segment spans residues 82-102 (PYWAGIIVCVVAYLGLFMLCV). Residues 103–117 (SYQVDERTCIQFSMK) lie on the Cytoplasmic side of the membrane. Residues 118–138 (LLYFVLSALGLVVCVLAVAFA) form a helical membrane-spanning segment. Residues 139–188 (AHHYSLLTHLTCENAPDSCQCKLPSSEPLSRTFVYRDVTDCTSITGTFQV) are Extracellular-facing. A helical transmembrane segment spans residues 189 to 209 (FLLVQMVLNLVCGLVCLVACF). Residues 210-238 (VMWKHRYQVFYVGVRMCPLSASEGQQQKV) lie on the Cytoplasmic side of the membrane.

The protein resides in the cell membrane. The protein localises to the sarcolemma. It localises to the postsynaptic cell membrane. In terms of biological role, component of the dystrophin-glycoprotein complex (DGC), a complex that spans the muscle plasma membrane and forms a link between the F-actin cytoskeleton and the extracellular matrix. Preferentially associates with the sarcoglycan subcomplex of the DGC. This is Sarcospan (SSPN) from Oryctolagus cuniculus (Rabbit).